We begin with the raw amino-acid sequence, 462 residues long: MMITKKLYQCMCLLCMVIALLDVVSSDDAKEQKMKDKIISLPGQPPNLNFSQFSGYVTVDPAAGRALFYWLTEAPRPSGTKPLVLWLNGGPGCSSIAYGASEEVGPFRVNPDGKTLRLNLYAWNKVANVLFLDSPAGVGFSYTNTSSDELTVGDKRTGEDAYRFLVRWLERFPEYKERAFYIAGESYAGHYIPELAQLIVNRNKGAKNPTINLKGILMGNPLVDDYNDNKGMRDYWWNHGLISDESYNDLTKWCLNDSILFPKLNCNAALNQALSEFGDIDPYNINSPACTTHASSNEWMQAWRYRGNDECVVGYTRKYMNDPNVHKSFHARLNGSTPWTPCSRVIRKNWKDSPKSMLPIIKNLLQAHLRIWIFSGDSDAVLPLSGTRHSINAMKLKSSKRWYPWYHSHGLVGGWSQVYEDGLLTYTTVRAAGHEVPLSQPRLALFLFTHFLANHSLPSSPS.

The N-terminal stretch at 1-26 (MMITKKLYQCMCLLCMVIALLDVVSS) is a signal peptide. 2 N-linked (GlcNAc...) asparagine glycosylation sites follow: Asn-49 and Asn-144. Intrachain disulfides connect Cys-93-Cys-342, Cys-254-Cys-266, and Cys-290-Cys-311. Ser-186 is a catalytic residue. N-linked (GlcNAc...) asparagine glycosylation occurs at Asn-256. N-linked (GlcNAc...) asparagine glycosylation is present at Asn-334. Catalysis depends on residues Asp-379 and His-434. N-linked (GlcNAc...) asparagine glycosylation occurs at Asn-454.

Belongs to the peptidase S10 family. As to expression, expressed in seedlings, roots and senescent leaves.

It is found in the secreted. Functionally, probable carboxypeptidase. This chain is Serine carboxypeptidase-like 28 (SCPL28), found in Arabidopsis thaliana (Mouse-ear cress).